The following is a 512-amino-acid chain: MFAKATRNFLKEVDAGGDLISVSHLNDSDKLQLLSLVTKKKRYWCWQRPKYQILSATLEDVLTEGHCLSPVVVESDFVKYESKCENHKSGAIGTVVGKVKLNVGGKGVVESHSSFGTLRKQEVDVQQLIQDAVKRTVNMDNLVLQQVLESRNEVLCVLTQKIMTTQKCVISEHVQSEETCGGMVGIQTKTIQVSATEDGTVTTDTNVVLEIPAATTIAYGIMELFVKQDGQFEFCLLQGKHGGFEHERKLDSVYLDPLAYREFAFLDMLDGGQGISSQDGPLRVVKQATLHLERSFHPFAVLPAQQQRALFCVLQKILFDEELLRALEQVCDDVAGGLWSSQAVLAMEELTDSQQQDLTAFLQLVGYRIQGEHPGPQDEVSNQKLFATAYFLVSALAEMPDNATVFLGTCCKLHVISSLCCLLHALSDDSVCDFHNPTLAPLRDTERFGIVQRLFASADIALERMQFSAKATILKDSCIFPLILHITLSGLSTLSKEHEEELCQSGHATGQD.

The tract at residues 1–56 is membrane targeting domain; sequence MFAKATRNFLKEVDAGGDLISVSHLNDSDKLQLLSLVTKKKRYWCWQRPKYQILSA. C45 is subject to S-(2-succinyl)cysteine. K120 participates in a covalent cross-link: Glycyl lysine isopeptide (Lys-Gly) (interchain with G-Cter in ubiquitin). S-(2-succinyl)cysteine occurs at positions 156, 168, and 180. K189 participates in a covalent cross-link: Glycyl lysine isopeptide (Lys-Gly) (interchain with G-Cter in ubiquitin). 3 positions are modified to S-(2-succinyl)cysteine: C235, C411, and C420.

This sequence belongs to the gasdermin family. As to quaternary structure, homooligomer; homooligomeric ring-shaped pore complex containing 27-28 subunits when inserted in the membrane. Cleavage at Asp-270 by CASP3 (mature and uncleaved precursor forms) or granzyme B (GZMB) relieves autoinhibition and is sufficient to initiate pyroptosis. Post-translationally, succination by the Krebs cycle intermediate fumarate, which leads to S-(2-succinyl)cysteine residues, inhibits processing by caspases, and ability to initiate pyroptosis. Succination modification is catalyzed by a non-enzymatic reaction caused by an accumulation of fumarate. In terms of processing, ubiquitinated on Lys-120 and Lys-189 via 'Lys-48'-linked polyubiquitin chains, leading to proteasomal degradation. Deubiquitinated by USP48, leading to increased stability. Palmitoylated. In terms of tissue distribution, expressed in spleen, kidney, large and small intestine, testicle, stomach and by CD4(+)CD(8+) T cells in thymus. Expressed by macrophages.

Its subcellular location is the cell membrane. It is found in the cytoplasm. The protein localises to the cytosol. With respect to regulation, the full-length protein before cleavage is inactive: intramolecular interactions between N- and C-terminal domains mediate autoinhibition in the absence of activation signal. The intrinsic pyroptosis-inducing activity is carried by the released N-terminal moiety (Gasdermin-E, N-terminal) following cleavage by CASP3 or granzyme B (GZMB). Activated by NLRP1 in the absence of GSDMD expression: NLRP1 cleaves and activates CASP8, promoting downstream activation of CASP3 and subsequent activation of GSDME. Precursor of a pore-forming protein that converts non-inflammatory apoptosis to pyroptosis. This form constitutes the precursor of the pore-forming protein: upon cleavage, the released N-terminal moiety (Gasdermin-E, N-terminal) binds to membranes and forms pores, triggering pyroptosis. Its function is as follows. Pore-forming protein produced by cleavage by CASP3 or granzyme B (GZMB), which converts non-inflammatory apoptosis to pyroptosis or promotes granzyme-mediated pyroptosis, respectively. After cleavage, moves to the plasma membrane, homooligomerizes within the membrane and forms pores of 10-15 nanometers (nm) of inner diameter, allowing the release of mature interleukins (IL1B and IL16) and triggering pyroptosis. Binds to inner leaflet lipids, bisphosphorylated phosphatidylinositols, such as phosphatidylinositol (4,5)-bisphosphate. Cleavage by CASP3 switches CASP3-mediated apoptosis induced by TNF or danger signals, such as chemotherapy drugs, to pyroptosis. Mediates secondary necrosis downstream of the mitochondrial apoptotic pathway and CASP3 activation as well as in response to viral agents. Exhibits bactericidal activity. Cleavage by GZMB promotes tumor suppressor activity by triggering robust anti-tumor immunity. Suppresses tumors by mediating granzyme-mediated pyroptosis in target cells of natural killer (NK) cells: cleavage by granzyme B (GZMB), delivered to target cells from NK-cells, triggers pyroptosis of tumor cells and tumor suppression. May play a role in the p53/TP53-regulated cellular response to DNA damage. This Mus musculus (Mouse) protein is Gasdermin-E.